The following is a 199-amino-acid chain: Shikimate kinase (199 aa).

ATP is bound at residue 32-37 (GSGKTS). Position 36 (Thr-36) interacts with Mg(2+). Residues Asp-54, Arg-78, and Gly-100 each contribute to the substrate site. Residue Arg-138 participates in ATP binding. Position 157 (Arg-157) interacts with substrate.

It belongs to the shikimate kinase family. As to quaternary structure, monomer. It depends on Mg(2+) as a cofactor.

The protein localises to the cytoplasm. The enzyme catalyses shikimate + ATP = 3-phosphoshikimate + ADP + H(+). It participates in metabolic intermediate biosynthesis; chorismate biosynthesis; chorismate from D-erythrose 4-phosphate and phosphoenolpyruvate: step 5/7. Catalyzes the specific phosphorylation of the 3-hydroxyl group of shikimic acid using ATP as a cosubstrate. This Synechococcus sp. (strain CC9605) protein is Shikimate kinase.